Consider the following 190-residue polypeptide: Potassium-transporting ATPase KdpC subunit (190 aa).

A helical membrane pass occupies residues 13–33; sequence VGFLLLTLMCGVVYPGIVTIF.

This sequence belongs to the KdpC family. The system is composed of three essential subunits: KdpA, KdpB and KdpC.

It is found in the cell membrane. In terms of biological role, part of the high-affinity ATP-driven potassium transport (or Kdp) system, which catalyzes the hydrolysis of ATP coupled with the electrogenic transport of potassium into the cytoplasm. This subunit acts as a catalytic chaperone that increases the ATP-binding affinity of the ATP-hydrolyzing subunit KdpB by the formation of a transient KdpB/KdpC/ATP ternary complex. In Listeria monocytogenes serotype 4b (strain CLIP80459), this protein is Potassium-transporting ATPase KdpC subunit.